Reading from the N-terminus, the 599-residue chain is Aspartate--tRNA(Asp/Asn) ligase (599 aa).

An L-aspartate-binding site is contributed by glutamate 174. The tract at residues 198–201 (QLFK) is aspartate. Arginine 220 provides a ligand contact to L-aspartate. Residues 220 to 222 (RDE) and glutamine 229 each bind ATP. Histidine 457 serves as a coordination point for L-aspartate. Glutamate 491 is a binding site for ATP. Arginine 498 lines the L-aspartate pocket. 543–546 (GLDR) is an ATP binding site.

The protein belongs to the class-II aminoacyl-tRNA synthetase family. Type 1 subfamily. In terms of assembly, homodimer.

Its subcellular location is the cytoplasm. It carries out the reaction tRNA(Asx) + L-aspartate + ATP = L-aspartyl-tRNA(Asx) + AMP + diphosphate. Its function is as follows. Aspartyl-tRNA synthetase with relaxed tRNA specificity since it is able to aspartylate not only its cognate tRNA(Asp) but also tRNA(Asn). Reaction proceeds in two steps: L-aspartate is first activated by ATP to form Asp-AMP and then transferred to the acceptor end of tRNA(Asp/Asn). The sequence is that of Aspartate--tRNA(Asp/Asn) ligase from Paraburkholderia phytofirmans (strain DSM 17436 / LMG 22146 / PsJN) (Burkholderia phytofirmans).